A 574-amino-acid chain; its full sequence is Arginine--tRNA ligase (574 aa).

Residues 126 to 136 carry the 'HIGH' region motif; that stretch reads PNIAKRMHVGH.

Belongs to the class-I aminoacyl-tRNA synthetase family. In terms of assembly, monomer.

The protein localises to the cytoplasm. The catalysed reaction is tRNA(Arg) + L-arginine + ATP = L-arginyl-tRNA(Arg) + AMP + diphosphate. The protein is Arginine--tRNA ligase of Chloroflexus aurantiacus (strain ATCC 29366 / DSM 635 / J-10-fl).